A 534-amino-acid polypeptide reads, in one-letter code: CTP synthase (534 aa).

Residues 1 to 267 (MTKYIFVTGG…DQIVCDHLKL (267 aa)) form an amidoligase domain region. Ser13 lines the CTP pocket. UTP is bound at residue Ser13. 14–19 (SIGKGI) provides a ligand contact to ATP. Tyr54 lines the L-glutamine pocket. Asp71 contributes to the ATP binding site. 2 residues coordinate Mg(2+): Asp71 and Glu141. CTP-binding positions include 148–150 (DIE), 188–193 (KTKPTQ), and Lys224. UTP is bound by residues 188-193 (KTKPTQ) and Lys224. 240 to 242 (RDV) lines the ATP pocket. Positions 292–534 (KIALVGKYVE…FVTAAIKNSN (243 aa)) constitute a Glutamine amidotransferase type-1 domain. Gly354 is a binding site for L-glutamine. The Nucleophile; for glutamine hydrolysis role is filled by Cys381. Residues 382 to 385 (LGMQ), Glu405, and Arg463 each bind L-glutamine. Catalysis depends on residues His508 and Glu510.

Belongs to the CTP synthase family. As to quaternary structure, homotetramer.

The enzyme catalyses UTP + L-glutamine + ATP + H2O = CTP + L-glutamate + ADP + phosphate + 2 H(+). It carries out the reaction L-glutamine + H2O = L-glutamate + NH4(+). The catalysed reaction is UTP + NH4(+) + ATP = CTP + ADP + phosphate + 2 H(+). Its pathway is pyrimidine metabolism; CTP biosynthesis via de novo pathway; CTP from UDP: step 2/2. With respect to regulation, allosterically activated by GTP, when glutamine is the substrate; GTP has no effect on the reaction when ammonia is the substrate. The allosteric effector GTP functions by stabilizing the protein conformation that binds the tetrahedral intermediate(s) formed during glutamine hydrolysis. Inhibited by the product CTP, via allosteric rather than competitive inhibition. Catalyzes the ATP-dependent amination of UTP to CTP with either L-glutamine or ammonia as the source of nitrogen. Regulates intracellular CTP levels through interactions with the four ribonucleotide triphosphates. In Streptococcus pyogenes serotype M2 (strain MGAS10270), this protein is CTP synthase.